Here is a 321-residue protein sequence, read N- to C-terminus: Bifunctional methyltransferase/endonuclease (321 aa).

The segment at 1–86 (MLSVDYENFD…PLGSAEKMRR (86 aa)) is probable methylated-DNA--protein-cysteine methyltransferase. Residue cysteine 61 is part of the active site. Residues 87-318 (LIRDGITITN…YDFSTRNTAI (232 aa)) are endonuclease V. Mg(2+) contacts are provided by aspartate 145 and aspartate 204.

In the N-terminal section; belongs to the MGMT family. It in the C-terminal section; belongs to the endonuclease V family. Requires Mg(2+) as cofactor.

Its subcellular location is the cytoplasm. It catalyses the reaction Endonucleolytic cleavage at apurinic or apyrimidinic sites to products with a 5'-phosphate.. In terms of biological role, DNA repair enzyme involved in the repair of deaminated bases. Selectively cleaves double-stranded DNA at the second phosphodiester bond 3' to a deoxyinosine leaving behind the intact lesion on the nicked DNA. This Thermoplasma volcanium (strain ATCC 51530 / DSM 4299 / JCM 9571 / NBRC 15438 / GSS1) protein is Bifunctional methyltransferase/endonuclease.